The chain runs to 405 residues: L-carnitine CoA-transferase (405 aa).

Lysine 97 and arginine 104 together coordinate CoA. Catalysis depends on aspartate 169, which acts as the Nucleophile.

It belongs to the CoA-transferase III family. CaiB subfamily. Homodimer.

The protein localises to the cytoplasm. The catalysed reaction is crotonobetainyl-CoA + (R)-carnitine = crotonobetaine + (R)-carnitinyl-CoA. It carries out the reaction 4-(trimethylamino)butanoyl-CoA + (R)-carnitine = (R)-carnitinyl-CoA + 4-(trimethylamino)butanoate. Its pathway is amine and polyamine metabolism; carnitine metabolism. Its function is as follows. Catalyzes the reversible transfer of the CoA moiety from gamma-butyrobetainyl-CoA to L-carnitine to generate L-carnitinyl-CoA and gamma-butyrobetaine. Is also able to catalyze the reversible transfer of the CoA moiety from gamma-butyrobetainyl-CoA or L-carnitinyl-CoA to crotonobetaine to generate crotonobetainyl-CoA. The protein is L-carnitine CoA-transferase of Escherichia coli (strain K12 / MC4100 / BW2952).